Reading from the N-terminus, the 445-residue chain is UNC93-like protein MFSD11 (445 aa).

Residues 8–28 (LLNIIILGIGFMFMFTAFQTS) form a helical membrane-spanning segment. N40 carries an N-linked (GlcNAc...) asparagine glycan. Transmembrane regions (helical) follow at residues 53–73 (AIIYSVFSASNLIAPSIVAVI), 74–94 (GCQMSMFLSGLLYSAYIAMFI), 98–118 (TWSFYTLSVLIGIAAAVLWTA), and 138–158 (IFWALLQFSMLFGNLFIYLAW). N163 carries an N-linked (GlcNAc...) asparagine glycan. Helical transmembrane passes span 170-190 (RTVFIALTVISLVGSVLFFLI), 239-259 (MLLLSILVAYTGLELTFYSGV), 277-297 (LIGLSGIFVGLGEVLGGGLFG), 309-329 (PVVILGVVVHFLAFYMIYLYM), 345-365 (AFINPSKTIALACSFLLGLGD), 385-405 (APAFAVFKFVQSVSAAVAFFY), and 415-435 (LLILVIFGFFGTISFFFVEWG).

The protein belongs to the unc-93 family.

It localises to the membrane. The protein is UNC93-like protein MFSD11 (mfsd11) of Xenopus tropicalis (Western clawed frog).